Reading from the N-terminus, the 126-residue chain is uncharacterized protein (126 aa).

The disordered stretch occupies residues 13–45; the sequence is VAPKAGREEEQPPPPAGLGCGARGEPGRGPLEH.

It localises to the cytoplasm. The protein localises to the cytoskeleton. The protein resides in the cilium basal body. This is an uncharacterized protein from Homo sapiens (Human).